Here is a 161-residue protein sequence, read N- to C-terminus: Nucleotide-binding protein Gbem_0619 (161 aa).

The protein belongs to the YajQ family.

Functionally, nucleotide-binding protein. This chain is Nucleotide-binding protein Gbem_0619, found in Citrifermentans bemidjiense (strain ATCC BAA-1014 / DSM 16622 / JCM 12645 / Bem) (Geobacter bemidjiensis).